The following is a 104-amino-acid chain: Circadian clock oscillator protein KaiB (104 aa).

The protein belongs to the KaiB family. In terms of assembly, the KaiABC complex composition changes during the circadian cycle to control KaiC phosphorylation. Complexes KaiC(6), KaiA(2-4):KaiC(6), KaiB(6):KaiC(6) and KaiC(6):KaiB(6):KaiA(12) are among the most important forms, many form cooperatively. Undergoes a major conformational rearrangment; in the free state forms homotetramers as a dimer of dimers. When bound to the CI domain of KaiC switches to a monomeric thioredoxin-fold (KaiB(fs)). KaiB(fs) binds CikA, leading it to dephosphorylate phospho-RpaA.

Its function is as follows. Key component of the KaiABC oscillator complex, which constitutes the main circadian regulator in cyanobacteria. Complex composition changes during the circadian cycle to control KaiC phosphorylation. KaiA stimulates KaiC autophosphorylation, while KaiB sequesters KaiA, leading to KaiC autodephosphorylation. Phospho-Ser-431 KaiC accumulation triggers binding of KaiB to form the KaiB(6):KaiC(6) complex, leading to changes in output regulators CikA and SasA. KaiB switches to a thioredoxin-like fold (KaiB(fs)) when bound to KaiC. KaiB(6):KaiC(6) formation exposes a site for KaiA binding that sequesters KaiA from KaiC, making the KaiC(6):KaiB(6):KaiA(12) complex that results in KaiC autodephosphorylation. A metamorphic protein which reversibly switches between an inactive tetrameric fold and a rare, thioredoxin-like monomeric fold (KaiB(fs)). KaiB(fs) binds phospho-KaiC, KaiA and CikA. KaiA and CikA compete for binding to KaiB(fs), and KaiB(fs) and SasA compete for binding to KaiC, thus the clock oscillator and output signal pathway are tightly coupled. The chain is Circadian clock oscillator protein KaiB from Parasynechococcus marenigrum (strain WH8102).